Consider the following 312-residue polypeptide: Malate dehydrogenase (312 aa).

NAD(+) is bound by residues 7-13 (GAAGGIG) and Asp34. Substrate is bound by residues Arg81 and Arg87. NAD(+) contacts are provided by residues Asn94 and 117–119 (ITN). Asn119 and Arg153 together coordinate substrate. His177 functions as the Proton acceptor in the catalytic mechanism. An NAD(+)-binding site is contributed by Met227.

Belongs to the LDH/MDH superfamily. MDH type 1 family. As to quaternary structure, homodimer.

The catalysed reaction is (S)-malate + NAD(+) = oxaloacetate + NADH + H(+). Its function is as follows. Catalyzes the reversible oxidation of malate to oxaloacetate. This Escherichia coli O139:H28 (strain E24377A / ETEC) protein is Malate dehydrogenase.